Reading from the N-terminus, the 407-residue chain is Phosphopentomutase (407 aa).

Mn(2+) is bound by residues Asp10, Asp306, His311, Asp347, His348, and His359.

This sequence belongs to the phosphopentomutase family. It depends on Mn(2+) as a cofactor.

The protein localises to the cytoplasm. It carries out the reaction 2-deoxy-alpha-D-ribose 1-phosphate = 2-deoxy-D-ribose 5-phosphate. The catalysed reaction is alpha-D-ribose 1-phosphate = D-ribose 5-phosphate. The protein operates within carbohydrate degradation; 2-deoxy-D-ribose 1-phosphate degradation; D-glyceraldehyde 3-phosphate and acetaldehyde from 2-deoxy-alpha-D-ribose 1-phosphate: step 1/2. In terms of biological role, isomerase that catalyzes the conversion of deoxy-ribose 1-phosphate (dRib-1-P) and ribose 1-phosphate (Rib-1-P) to deoxy-ribose 5-phosphate (dRib-5-P) and ribose 5-phosphate (Rib-5-P), respectively. This is Phosphopentomutase from Salmonella arizonae (strain ATCC BAA-731 / CDC346-86 / RSK2980).